A 437-amino-acid chain; its full sequence is MFKEKKAPLVCKFGGTSVGTSSSIQRVCEIIRKEKPSFVVVSAVAGVTDLLEEFCRAPVGQKSQFTAMIREKHESIAKELGIDVAIEPFLGPLKQFEGAGHLQQEDQAKILAIGEDLSASLICSYCRANSLQLEQLEARQVILTDSQFLRAEPDLALMQTMWGELVLKENTIYLMQGFLGATASGATTVLGRGGSDFSASLVGELCEARELRIYTDVRGVHTADPKILKDTQLIDFLTFEEMQELASSGSKVLHQDMLKPCIRAKVPIFVTSTFDLTKEGTWICASLNEGVEGPEIKALSLKANQALWFVEYHSPLMRLENVLRCVRGLGSIPGVVMAQNSGVYFTVDWEENNQSMTEALREFGAVSCEGPVSLVALVGAKLTSWSMTGVFDALQGTPVLYWSQTDTVINLIINEESGVVVTKLLHDYVLGLNRSGL.

Belongs to the aspartokinase family.

It carries out the reaction L-aspartate + ATP = 4-phospho-L-aspartate + ADP. It functions in the pathway amino-acid biosynthesis; L-lysine biosynthesis via DAP pathway; (S)-tetrahydrodipicolinate from L-aspartate: step 1/4. Its pathway is amino-acid biosynthesis; L-methionine biosynthesis via de novo pathway; L-homoserine from L-aspartate: step 1/3. It participates in amino-acid biosynthesis; L-threonine biosynthesis; L-threonine from L-aspartate: step 1/5. This chain is Aspartokinase (lysC), found in Chlamydia muridarum (strain MoPn / Nigg).